A 340-amino-acid polypeptide reads, in one-letter code: Phosphate acyltransferase (340 aa).

The protein belongs to the PlsX family. As to quaternary structure, homodimer. Probably interacts with PlsY.

It is found in the cytoplasm. The catalysed reaction is a fatty acyl-[ACP] + phosphate = an acyl phosphate + holo-[ACP]. It functions in the pathway lipid metabolism; phospholipid metabolism. Its function is as follows. Catalyzes the reversible formation of acyl-phosphate (acyl-PO(4)) from acyl-[acyl-carrier-protein] (acyl-ACP). This enzyme utilizes acyl-ACP as fatty acyl donor, but not acyl-CoA. This is Phosphate acyltransferase from Leptospira biflexa serovar Patoc (strain Patoc 1 / ATCC 23582 / Paris).